Here is a 115-residue protein sequence, read N- to C-terminus: MGKEKVEEKKENKSGVKEKIQNWIADAKKRGTWQTLLLKQIGNTRLNVAVTPDGSALLKIFINRPQNGIIFSLNELEDIKKAIEIAESIKSELESIPEFKNAKVSLKTQKGVLDE.

This is an uncharacterized protein from Acidianus filamentous virus 1 (isolate United States/Yellowstone) (AFV-1).